The following is a 129-amino-acid chain: Trefoil factor 2 (129 aa).

The first 23 residues, 1–23 (MGRRDAQLLAALLVLGLCALAGS), serve as a signal peptide directing secretion. P-type domains are found at residues 29 to 73 (CQCS…FHPL) and 79 to 122 (DQCV…FFPK). Disulfide bonds link C29-C127, C31-C58, C42-C57, C52-C69, C81-C107, C91-C106, and C101-C118.

In terms of tissue distribution, stomach.

It localises to the secreted. Inhibits gastrointestinal motility and gastric acid secretion. Could function as a structural component of gastric mucus, possibly by stabilizing glycoproteins in the mucus gel through interactions with carbohydrate side chains. This Homo sapiens (Human) protein is Trefoil factor 2 (TFF2).